The sequence spans 143 residues: Small ribosomal subunit protein bS6 (143 aa).

The disordered stretch occupies residues 100–143 (QSFIMKSKDDKGDKPERRRRDDDESGDVGVSNDSDNDGGNAEAA). Positions 105 to 121 (KSKDDKGDKPERRRRDD) are enriched in basic and acidic residues. A compositionally biased stretch (low complexity) spans 126 to 143 (DVGVSNDSDNDGGNAEAA).

It belongs to the bacterial ribosomal protein bS6 family.

Binds together with bS18 to 16S ribosomal RNA. The protein is Small ribosomal subunit protein bS6 of Xylella fastidiosa (strain M12).